The chain runs to 1556 residues: Pentafunctional AROM polypeptide (1556 aa).

A 3-dehydroquinate synthase region spans residues 1–387 (MFAEGQIQKV…HEQKASSVAD (387 aa)). NAD(+)-binding positions include 46–48 (DTN), 84–87 (ETSK), 115–117 (GGV), and aspartate 120. Arginine 131 is a binding site for 7-phospho-2-dehydro-3-deoxy-D-arabino-heptonate. An NAD(+)-binding site is contributed by 140–141 (TT). The 7-phospho-2-dehydro-3-deoxy-D-arabino-heptonate site is built by aspartate 147 and lysine 153. Lysine 162 contributes to the NAD(+) binding site. Residue asparagine 163 participates in 7-phospho-2-dehydro-3-deoxy-D-arabino-heptonate binding. Residues 180-183 (FLET) and asparagine 191 each bind NAD(+). Zn(2+) is bound at residue glutamate 195. 7-phospho-2-dehydro-3-deoxy-D-arabino-heptonate is bound by residues 195 to 198 (EVIK) and lysine 253. Residue glutamate 263 is the Proton acceptor; for 3-dehydroquinate synthase activity of the active site. 7-phospho-2-dehydro-3-deoxy-D-arabino-heptonate is bound by residues 267–271 (RNLLN) and histidine 274. Zn(2+) is bound at residue histidine 274. Histidine 278 (proton acceptor; for 3-dehydroquinate synthase activity) is an active-site residue. Histidine 290 and lysine 359 together coordinate 7-phospho-2-dehydro-3-deoxy-D-arabino-heptonate. Histidine 290 is a binding site for Zn(2+). Residues 400–837 (VGEAPVGDKK…WDVLSGVFNV (438 aa)) form an EPSP synthase region. Catalysis depends on cysteine 819, which acts as the For EPSP synthase activity. The segment at 858-1049 (PSIFIVGMRG…HKDQFTSFLS (192 aa)) is shikimate kinase. 864-871 (GMRGAGKT) is an ATP binding site. The segment at 1050 to 1266 (LTFPDVSIAA…AAPGQLSVEE (217 aa)) is 3-dehydroquinase. The active-site Proton acceptor; for 3-dehydroquinate dehydratase activity is the histidine 1171. Lysine 1200 (schiff-base intermediate with substrate; for 3-dehydroquinate dehydratase activity) is an active-site residue. The tract at residues 1279 to 1556 (KNLSFFIVGT…EVGEKAVLGN (278 aa)) is shikimate dehydrogenase.

In the N-terminal section; belongs to the sugar phosphate cyclases superfamily. Dehydroquinate synthase family. It in the 2nd section; belongs to the EPSP synthase family. The protein in the 3rd section; belongs to the shikimate kinase family. This sequence in the 4th section; belongs to the type-I 3-dehydroquinase family. In the C-terminal section; belongs to the shikimate dehydrogenase family. In terms of assembly, homodimer. Zn(2+) is required as a cofactor.

The protein localises to the cytoplasm. The catalysed reaction is 7-phospho-2-dehydro-3-deoxy-D-arabino-heptonate = 3-dehydroquinate + phosphate. It catalyses the reaction 3-dehydroquinate = 3-dehydroshikimate + H2O. It carries out the reaction shikimate + NADP(+) = 3-dehydroshikimate + NADPH + H(+). The enzyme catalyses shikimate + ATP = 3-phosphoshikimate + ADP + H(+). The catalysed reaction is 3-phosphoshikimate + phosphoenolpyruvate = 5-O-(1-carboxyvinyl)-3-phosphoshikimate + phosphate. The protein operates within metabolic intermediate biosynthesis; chorismate biosynthesis; chorismate from D-erythrose 4-phosphate and phosphoenolpyruvate: step 2/7. It participates in metabolic intermediate biosynthesis; chorismate biosynthesis; chorismate from D-erythrose 4-phosphate and phosphoenolpyruvate: step 3/7. It functions in the pathway metabolic intermediate biosynthesis; chorismate biosynthesis; chorismate from D-erythrose 4-phosphate and phosphoenolpyruvate: step 4/7. Its pathway is metabolic intermediate biosynthesis; chorismate biosynthesis; chorismate from D-erythrose 4-phosphate and phosphoenolpyruvate: step 5/7. The protein operates within metabolic intermediate biosynthesis; chorismate biosynthesis; chorismate from D-erythrose 4-phosphate and phosphoenolpyruvate: step 6/7. The AROM polypeptide catalyzes 5 consecutive enzymatic reactions in prechorismate polyaromatic amino acid biosynthesis. This chain is Pentafunctional AROM polypeptide, found in Yarrowia lipolytica (strain CLIB 122 / E 150) (Yeast).